The chain runs to 298 residues: Junctional adhesion molecule A (298 aa).

The N-terminal stretch at 1 to 28 (MGTEARAGRRQLLVFTSVVLSSLALGRG) is a signal peptide. Ig-like V-type domains follow at residues 29-126 (AVYT…VQLT) and 134-227 (PTVH…EAVR). The Extracellular segment spans residues 29-237 (AVYTSEPDVR…MEAAELNVGG (209 aa)). Disulfide bonds link Cys-49-Cys-108 and Cys-152-Cys-211. An N-linked (GlcNAc...) asparagine glycan is attached at Asn-184. The helical transmembrane segment at 238-258 (IVAAVLVTLILLGFLILGIWF) threads the bilayer. Residues 259-298 (AYRRGYFDRTKKGTSSKKVIYSQPAARSEGEFRQTSSFLV) are Cytoplasmic-facing. Phosphoserine occurs at positions 280 and 286.

It belongs to the immunoglobulin superfamily. Interacts with the ninth PDZ domain of MPDZ. Interacts with the first PDZ domain of PARD3. The association between PARD3 and PARD6B probably disrupts this interaction. Interacts with ITGAL (via I-domain). Interacts with CD151. As to quaternary structure, (Microbial infection) Interacts with calicivirus capsid protein. In terms of assembly, (Microbial infection) Interacts with the orthoreovirus sigma-1 capsid protein.

It localises to the cell junction. Its subcellular location is the tight junction. It is found in the cell membrane. Seems to play a role in epithelial tight junction formation. Appears early in primordial forms of cell junctions and recruits PARD3. The association of the PARD6-PARD3 complex may prevent the interaction of PARD3 with JAM1, thereby preventing tight junction assembly. Plays a role in regulating monocyte transmigration involved in integrity of epithelial barrier. Ligand for integrin alpha-L/beta-2 involved in memory T-cell and neutrophil transmigration. Involved in platelet activation. In terms of biological role, (Microbial infection) Acts as a functional receptor for murine norovirus. Functionally, (Microbial infection) In case of orthoreovirus infection, serves as receptor for the virus. In Felis catus (Cat), this protein is Junctional adhesion molecule A (F11R).